A 315-amino-acid chain; its full sequence is 3-oxoacyl-[acyl-carrier-protein] reductase 3, chloroplastic (315 aa).

A chloroplast-targeting transit peptide spans 1–55 (MATTVAATKLTSLKAVKKLGFREIRQVRQWTPLQSSMPHFGSRQSFATSTVVKAQ). Residue 77-101 (VTGASRGIGKAIALSLGKAGCKVLV) coordinates NADP(+). Residue Ser-209 participates in substrate binding. Catalysis depends on Tyr-222, which acts as the Proton acceptor.

Belongs to the short-chain dehydrogenases/reductases (SDR) family. As to quaternary structure, homotetramer.

The protein localises to the plastid. It is found in the chloroplast. The catalysed reaction is a (3R)-hydroxyacyl-[ACP] + NADP(+) = a 3-oxoacyl-[ACP] + NADPH + H(+). It functions in the pathway lipid metabolism; fatty acid biosynthesis. The polypeptide is 3-oxoacyl-[acyl-carrier-protein] reductase 3, chloroplastic (bkr3) (Brassica napus (Rape)).